The primary structure comprises 62 residues: Single-pass membrane and coiled-coil domain-containing protein 4 homolog (62 aa).

The tract at residues 1–27 is disordered; sequence MRQLPGKAAKETRKMKRERKQQNKEGH. Positions 9–31 form a coiled coil; that stretch reads AKETRKMKRERKQQNKEGHNRVV. The helical transmembrane segment at 30 to 50 threads the bilayer; the sequence is VVTVAIPVCLAVFVMLIVYVY.

It belongs to the SMCO4 family.

The protein localises to the membrane. This is Single-pass membrane and coiled-coil domain-containing protein 4 homolog from Nematostella vectensis (Starlet sea anemone).